We begin with the raw amino-acid sequence, 184 residues long: Ribosome-recycling factor (184 aa).

This sequence belongs to the RRF family.

It is found in the cytoplasm. Functionally, responsible for the release of ribosomes from messenger RNA at the termination of protein biosynthesis. May increase the efficiency of translation by recycling ribosomes from one round of translation to another. In Stenotrophomonas maltophilia (strain R551-3), this protein is Ribosome-recycling factor.